The following is a 101-amino-acid chain: Small ribosomal subunit protein uS14 (101 aa).

It belongs to the universal ribosomal protein uS14 family. In terms of assembly, part of the 30S ribosomal subunit. Contacts proteins S3 and S10.

In terms of biological role, binds 16S rRNA, required for the assembly of 30S particles and may also be responsible for determining the conformation of the 16S rRNA at the A site. This chain is Small ribosomal subunit protein uS14, found in Escherichia coli O8 (strain IAI1).